The following is a 230-amino-acid chain: Lactate utilization protein C (230 aa).

The protein belongs to the LutC/YkgG family.

In terms of biological role, is involved in L-lactate degradation and allows cells to grow with lactate as the sole carbon source. This Halalkalibacterium halodurans (strain ATCC BAA-125 / DSM 18197 / FERM 7344 / JCM 9153 / C-125) (Bacillus halodurans) protein is Lactate utilization protein C.